The primary structure comprises 241 residues: tRNA pseudouridine synthase A (241 aa).

D52 acts as the Nucleophile in catalysis. Residue Y111 coordinates substrate.

It belongs to the tRNA pseudouridine synthase TruA family. In terms of assembly, homodimer.

It carries out the reaction uridine(38/39/40) in tRNA = pseudouridine(38/39/40) in tRNA. In terms of biological role, formation of pseudouridine at positions 38, 39 and 40 in the anticodon stem and loop of transfer RNAs. The protein is tRNA pseudouridine synthase A of Ureaplasma urealyticum serovar 10 (strain ATCC 33699 / Western).